Consider the following 508-residue polypeptide: Transcription termination factor MTERF4, chloroplastic (508 aa).

The transit peptide at 1–79 directs the protein to the chloroplast; the sequence is MMKSLFLFSA…PSLLDMERGR (79 aa). Positions 28–49 are enriched in low complexity; it reads RLTASASTSASSPPRAGCSRGP. 2 disordered regions span residues 28 to 69 and 475 to 508; these read RLTA…LYAR and FDTNTLSERVEDEVEDEDLDEDSDYDSTDDEFIE. Residues 484–508 show a composition bias toward acidic residues; it reads VEDEVEDEDLDEDSDYDSTDDEFIE.

This sequence belongs to the mTERF family.

The protein resides in the plastid. Its subcellular location is the chloroplast stroma. Transcription termination factor required for processing and steady-state levels of plastid transcripts. Required for splicing of the chloroplastic group II intron. Required for the accumulation of 16S and 23S ribosomes. The chain is Transcription termination factor MTERF4, chloroplastic from Oryza sativa subsp. japonica (Rice).